The sequence spans 153 residues: Small ribosomal subunit protein bS16 (153 aa).

The disordered stretch occupies residues 130-153; that stretch reads EAEAAAAAEEAPAEEAAEEAPAEA. Residues 140-153 are compositionally biased toward acidic residues; sequence APAEEAAEEAPAEA.

The protein belongs to the bacterial ribosomal protein bS16 family.

This is Small ribosomal subunit protein bS16 from Bifidobacterium longum (strain NCC 2705).